Here is a 906-residue protein sequence, read N- to C-terminus: MERDGDQAGHGPRHGSAGNGRELESPAAASLLAPMDLGEEPLEKAERARPAKDPNTYKVLSLVLSVCVLTTILGCIFGLKPSCAKEVKSCKGRCFERTFSNCRCDAACVSLGNCCLDFQETCVEPTHIWTCNKFRCGEKRLSRFVCSCADDCKTHNDCCINYSSVCQDKKSWVEETCESIDTPECPAEFESPPTLLFSLDGFRAEYLHTWGGLLPVISKLKNCGTYTKNMRPMYPTKTFPNHYSIVTGLYPESHGIIDNKMYDPKMNASFSLKSKEKFNPLWYKGQPIWVTANHQEVKSGTYFWPGSDVEIDGILPDIYKVYNGSVPFEERILAVLEWLQLPSHERPHFYTLYLEEPDSSGHSHGPVSSEVIKALQKVDRLVGMLMDGLKDLGLDKCLNLILISDHGMEQGSCKKYVYLNKYLGDVNNVKVVYGPAARLRPTDVPETYYSFNYEALAKNLSCREPNQHFRPYLKPFLPKRLHFAKSDRIEPLTFYLDPQWQLALNPSERKYCGSGFHGSDNLFSNMQALFIGYGPAFKHGAEVDSFENIEVYNLMCDLLGLIPAPNNGSHGSLNHLLKKPIYNPSHPKEEGFLSQCPIKSTSNDLGCTCDPWIVPIKDFEKQLNLTTEDVDDIYHMTVPYGRPRILLKQHHVCLLQQQQFLTGYSLDLLMPLWASYTFLRNDQFSRDDFSNCLYQDLRIPLSPVHKCSYYKSNSKLSYGFLTPPRLNRVSNHIYSEALLTSNIVPMYQSFQVIWHYLHDTLLQRYAHERNGINVVSGPVFDFDYDGRYDSLEILKQNSRVIRSQEILIPTHFFIVLTSCKQLSETPLECSALESSAYILPHRPDNIESCTHGKRESSWVEELLTLHRARVTDVELITGLSFYQDRQESVSELLRLKTHLPIFSQED.

The disordered stretch occupies residues 1–22 (MERDGDQAGHGPRHGSAGNGRE). Topologically, residues 1 to 58 (MERDGDQAGHGPRHGSAGNGRELESPAAASLLAPMDLGEEPLEKAERARPAKDPNTYK) are cytoplasmic. Serine 25 carries the post-translational modification Phosphoserine. Residues 27-34 (AAASLLAP) carry the Di-leucine motif motif. Residues 59 to 79 (VLSLVLSVCVLTTILGCIFGL) form a helical; Signal-anchor for type II membrane protein membrane-spanning segment. Residues 80–906 (KPSCAKEVKS…THLPIFSQED (827 aa)) lie on the Extracellular side of the membrane. 2 SMB domains span residues 86 to 126 (EVKS…VEPT) and 127 to 171 (HIWT…DKKS). Cystine bridges form between cysteine 90/cysteine 104, cysteine 94/cysteine 122, cysteine 102/cysteine 115, cysteine 108/cysteine 114, cysteine 131/cysteine 148, cysteine 136/cysteine 166, cysteine 146/cysteine 159, cysteine 152/cysteine 158, cysteine 177/cysteine 223, and cysteine 185/cysteine 397. N-linked (GlcNAc...) asparagine glycosylation occurs at asparagine 161. The interval 173–573 (VEETCESIDT…APNNGSHGSL (401 aa)) is phosphodiesterase. AMP is bound by residues aspartate 200, threonine 238, and asparagine 259. Zn(2+) is bound by residues aspartate 200 and threonine 238. Catalysis depends on threonine 238, which acts as the AMP-threonine intermediate. Threonine 238 and asparagine 259 together coordinate CMP. DTMP contacts are provided by threonine 238 and asparagine 259. GMP is bound by residues threonine 238 and asparagine 259. Threonine 238 is subject to Phosphothreonine. Residue asparagine 267 is glycosylated (N-linked (GlcNAc...) asparagine). 3 residues coordinate GMP: leucine 272, lysine 277, and tyrosine 322. Residues lysine 277 and tyrosine 322 each coordinate AMP. Positions 277 and 322 each coordinate CMP. Residue tyrosine 322 participates in dTMP binding. Residue asparagine 323 is glycosylated (N-linked (GlcNAc...) asparagine). Position 358 (aspartate 358) interacts with AMP. The Zn(2+) site is built by aspartate 358, histidine 362, aspartate 405, and histidine 406. Aspartate 358 is a binding site for CMP. Aspartate 358 serves as a coordination point for dTMP. A GMP-binding site is contributed by aspartate 358. Histidine 362 lines the 2',3'-cGAMP pocket. Histidine 406 contributes to the AMP binding site. Residue histidine 406 participates in CMP binding. Histidine 406 is a binding site for dTMP. Histidine 406 provides a ligand contact to GMP. 6 disulfides stabilise this stretch: cysteine 413/cysteine 512, cysteine 462/cysteine 849, cysteine 596/cysteine 653, cysteine 607/cysteine 707, cysteine 609/cysteine 692, and cysteine 819/cysteine 829. An N-linked (GlcNAc...) asparagine glycan is attached at asparagine 459. Serine 514 contacts 2',3'-cGAMP. Residue histidine 517 coordinates AMP. Residue histidine 517 participates in Zn(2+) binding. Histidine 517 contributes to the CMP binding site. Histidine 517 serves as a coordination point for dTMP. Histidine 517 is a GMP binding site. Residues asparagine 567 and asparagine 624 are each glycosylated (N-linked (GlcNAc...) asparagine). The segment at 579-628 (KPIYNPSHPKEEGFLSQCPIKSTSNDLGCTCDPWIVPIKDFEKQLNLTTE) is linker. Positions 635-906 (HMTVPYGRPR…THLPIFSQED (272 aa)) are nuclease-like domain. Ca(2+) contacts are provided by aspartate 781, aspartate 783, aspartate 785, arginine 787, and aspartate 789.

Belongs to the nucleotide pyrophosphatase/phosphodiesterase family. In terms of assembly, ectonucleotide pyrophosphatase/phosphodiesterase family member 1: Homodimer. Ectonucleotide pyrophosphatase/phosphodiesterase family member 1: Interacts with INSR; leading to inhibit INSR autophosphorylation and subsequent activation of INSR kinase activity. Ectonucleotide pyrophosphatase/phosphodiesterase family member 1, secreted form: Monomeric. Requires Zn(2+) as cofactor. In terms of processing, N-glycosylated. The secreted form is produced through cleavage at Lys-85 by intracellular processing. In terms of tissue distribution, selectively expressed on the surface of antibody-secreting cells. Expressed in osteocytes and osteoclasts.

The protein localises to the cell membrane. Its subcellular location is the basolateral cell membrane. The protein resides in the secreted. It catalyses the reaction Hydrolytically removes 5'-nucleotides successively from the 3'-hydroxy termini of 3'-hydroxy-terminated oligonucleotides.. It carries out the reaction a ribonucleoside 5'-triphosphate + H2O = a ribonucleoside 5'-phosphate + diphosphate + H(+). The catalysed reaction is ATP + H2O = AMP + diphosphate + H(+). The enzyme catalyses UTP + H2O = UMP + diphosphate + H(+). It catalyses the reaction GTP + H2O = GMP + diphosphate + H(+). It carries out the reaction CTP + H2O = CMP + diphosphate + H(+). The catalysed reaction is 2',3'-cGAMP + 2 H2O = GMP + AMP + 2 H(+). The enzyme catalyses P(1),P(4)-bis(5'-adenosyl) tetraphosphate + H2O = AMP + ATP + 2 H(+). It catalyses the reaction 3',5'-cyclic AMP + H2O = AMP + H(+). With respect to regulation, at low concentrations of ATP, a phosphorylated intermediate is formed which inhibits further hydrolysis. Its function is as follows. Nucleotide pyrophosphatase that generates diphosphate (PPi) and functions in bone mineralization and soft tissue calcification by regulating pyrophosphate levels. PPi inhibits bone mineralization and soft tissue calcification by binding to nascent hydroxyapatite crystals, thereby preventing further growth of these crystals. Preferentially hydrolyzes ATP, but can also hydrolyze other nucleoside 5' triphosphates such as GTP, CTP and UTP to their corresponding monophosphates with release of pyrophosphate, as well as diadenosine polyphosphates, and also 3',5'-cAMP to AMP. May also be involved in the regulation of the availability of nucleotide sugars in the endoplasmic reticulum and Golgi, and the regulation of purinergic signaling. Inhibits ectopic joint calcification and maintains articular chondrocytes by repressing hedgehog signaling; it is however unclear whether hedgehog inhibition is direct or indirect. Appears to modulate insulin sensitivity. Also involved in melanogenesis. Also able to hydrolyze 2',3'-cGAMP (cyclic GMP-AMP), a second messenger that activates TMEM173/STING and triggers type-I interferon production. 2',3'-cGAMP degradation takes place in the lumen or extracellular space, and not in the cytosol where it is produced; the role of 2',3'-cGAMP hydrolysis is therefore unclear. Not able to hydrolyze the 2',3'-cGAMP linkage isomer 3',3'-cGAMP. The protein is Ectonucleotide pyrophosphatase/phosphodiesterase family member 1 of Mus musculus (Mouse).